We begin with the raw amino-acid sequence, 130 residues long: Small ribosomal subunit protein uS9 (130 aa).

This sequence belongs to the universal ribosomal protein uS9 family.

This is Small ribosomal subunit protein uS9 from Methylibium petroleiphilum (strain ATCC BAA-1232 / LMG 22953 / PM1).